A 397-amino-acid polypeptide reads, in one-letter code: 2,6-dihydroxypyridine 3-monooxygenase (397 aa).

FAD-binding positions include 14–16, 35–36, valine 49, leucine 120, aspartate 306, and 316–320; these read SIS, ER, and AAGGA.

As to quaternary structure, homodimer. It depends on FAD as a cofactor.

It catalyses the reaction 2,6-dihydroxypyridine + NADH + O2 + H(+) = 2,3,6-trihydroxypyridine + NAD(+) + H2O. Its pathway is alkaloid degradation; nicotine degradation. Functionally, catalyzes the conversion of 2,6-dihydroxypyridine into 2,3,6-trihydroxypyridine in the nicotine degradation pathway. The chain is 2,6-dihydroxypyridine 3-monooxygenase (dhpH) from Paenarthrobacter nicotinovorans (Arthrobacter nicotinovorans).